Consider the following 467-residue polypeptide: Glutamate--tRNA ligase (467 aa).

Residues 12–22 carry the 'HIGH' region motif; it reads PSPTGYLHIGG. The span at 114–128 shows a compositional bias: basic and acidic residues; the sequence is EQEAKKEKPRYDGRW. Residues 114–140 are disordered; sequence EQEAKKEKPRYDGRWRPAPGKTLPTPP. The short motif at 244–248 is the 'KMSKS' region element; sequence KLSKR. ATP is bound at residue lysine 247.

This sequence belongs to the class-I aminoacyl-tRNA synthetase family. Glutamate--tRNA ligase type 1 subfamily. As to quaternary structure, monomer.

It localises to the cytoplasm. The catalysed reaction is tRNA(Glu) + L-glutamate + ATP = L-glutamyl-tRNA(Glu) + AMP + diphosphate. Functionally, catalyzes the attachment of glutamate to tRNA(Glu) in a two-step reaction: glutamate is first activated by ATP to form Glu-AMP and then transferred to the acceptor end of tRNA(Glu). This is Glutamate--tRNA ligase from Azoarcus sp. (strain BH72).